The primary structure comprises 516 residues: GMP synthase [glutamine-hydrolyzing] (516 aa).

One can recognise a Glutamine amidotransferase type-1 domain in the interval 5–199 (SIIVLDFGSQ…ARNICGVTEK (195 aa)). Residue Cys82 is the Nucleophile of the active site. Residues His173 and Glu175 contribute to the active site. The GMPS ATP-PPase domain occupies 200–391 (WKMEHFLKEQ…LGLPESMINR (192 aa)). Residue 227-233 (SGGVDSS) participates in ATP binding.

Homodimer.

It catalyses the reaction XMP + L-glutamine + ATP + H2O = GMP + L-glutamate + AMP + diphosphate + 2 H(+). It functions in the pathway purine metabolism; GMP biosynthesis; GMP from XMP (L-Gln route): step 1/1. Functionally, catalyzes the synthesis of GMP from XMP. This is GMP synthase [glutamine-hydrolyzing] from Sulfurimonas denitrificans (strain ATCC 33889 / DSM 1251) (Thiomicrospira denitrificans (strain ATCC 33889 / DSM 1251)).